The following is a 263-amino-acid chain: UPF0739 protein C1orf74 homolog (263 aa).

This sequence belongs to the UPF0739 family.

In Mus musculus (Mouse), this protein is UPF0739 protein C1orf74 homolog.